A 101-amino-acid polypeptide reads, in one-letter code: Iron-sulfur cluster assembly protein CyaY (101 aa).

This sequence belongs to the frataxin family.

In terms of biological role, involved in iron-sulfur (Fe-S) cluster assembly. May act as a regulator of Fe-S biogenesis. The protein is Iron-sulfur cluster assembly protein CyaY of Rickettsia akari (strain Hartford).